The sequence spans 331 residues: uncharacterized protein (331 aa).

Disordered regions lie at residues 131–163 (ISHA…KKRS) and 190–209 (DEQK…VQSS). Residues 140 to 162 (RPKPTKPRASRKRAAIAQSKKKR) are compositionally biased toward basic residues. The segment covering 195 to 209 (RQSTSQPDKEIVQSS) has biased composition (polar residues).

This is an uncharacterized protein from Caenorhabditis elegans.